Consider the following 332-residue polypeptide: DNA packaging protein (332 aa).

Residues 1-207 (MDKSLFYNPQ…SERRKTRFGR (207 aa)) are ATPase. An ATP-binding site is contributed by 24–31 (GARGIGKS). Residues 233-332 (KRSKDSKFVF…YELFRKMRIQ (100 aa)) form a DNA-binding region.

Belongs to the phi29likevirus gp16 family. As to quaternary structure, homopentamer. Interacts with the packaging RNA (pRNA). Part of a DNA-gp3-gp16 complex.

The catalysed reaction is ATP + H2O = ADP + phosphate + H(+). In terms of biological role, ATPase required for the genome encapsidation reaction. Part of the active packaging motor via the binding to the packaging RNA (pRNA), itself fixed to the head-tail connector at the unique portal vertex of the prohead. Binds and supercoils the pre-formed, unit-length DNA bound to gp3 to produce an initiation complex for DNA packaging. Provides the energy to actively pump the viral DNA into the prohead. Approximately one molecule of ATP is used in the packaging of 2 bp of viral DNA. ATP hydrolysis results in a conformational change that causes the arginine/lysine finger of one subunit to move into the active site of its neighbor, where it interacts with the negatively charged oxygens on the gamma-phosphate of ATP. After packaging, the ATPase and the pRNA are released from the prohead. The chain is DNA packaging protein (16) from Bacillus phage phi29 (Bacteriophage phi-29).